A 181-amino-acid polypeptide reads, in one-letter code: Large ribosomal subunit protein uL5 (181 aa).

Belongs to the universal ribosomal protein uL5 family. In terms of assembly, part of the 50S ribosomal subunit; part of the 5S rRNA/L5/L18/L25 subcomplex. Contacts the 5S rRNA and the P site tRNA. Forms a bridge to the 30S subunit in the 70S ribosome.

In terms of biological role, this is one of the proteins that bind and probably mediate the attachment of the 5S RNA into the large ribosomal subunit, where it forms part of the central protuberance. In the 70S ribosome it contacts protein S13 of the 30S subunit (bridge B1b), connecting the 2 subunits; this bridge is implicated in subunit movement. Contacts the P site tRNA; the 5S rRNA and some of its associated proteins might help stabilize positioning of ribosome-bound tRNAs. The sequence is that of Large ribosomal subunit protein uL5 from Campylobacter hominis (strain ATCC BAA-381 / DSM 21671 / CCUG 45161 / LMG 19568 / NCTC 13146 / CH001A).